A 123-amino-acid polypeptide reads, in one-letter code: Small ribosomal subunit protein uS13 (123 aa).

A disordered region spans residues 97-123; sequence PVRGQKTKTNARTRKGPKKTVGRKKKK. The span at 101–123 shows a compositional bias: basic residues; the sequence is QKTKTNARTRKGPKKTVGRKKKK.

Belongs to the universal ribosomal protein uS13 family. Part of the 30S ribosomal subunit. Forms a loose heterodimer with protein S19. Forms two bridges to the 50S subunit in the 70S ribosome.

Functionally, located at the top of the head of the 30S subunit, it contacts several helices of the 16S rRNA. In the 70S ribosome it contacts the 23S rRNA (bridge B1a) and protein L5 of the 50S subunit (bridge B1b), connecting the 2 subunits; these bridges are implicated in subunit movement. Contacts the tRNAs in the A and P-sites. The protein is Small ribosomal subunit protein uS13 of Alkaliphilus oremlandii (strain OhILAs) (Clostridium oremlandii (strain OhILAs)).